The sequence spans 463 residues: MTRYFSIVLSLLLAVSCVFLPVASARQQQHQPLDRIVAVVDDNVVLKSELDRAIHNVKSQYVGHEGQLPPDEVLQRQVLERLILIKLQVARAQTNGIRVSDDELNQAISSIAENNKTSVDGLRQKLVAEGISFPEFRQSVRDEITVHHLRQGFAQSRIVVSEGEVDTALAQANSGAQYHLQHILVSLPDGATSEQIAIAQKKINGIKSVIDKGELAFSAAAVRYSDSPNALESGDLGWRSLDEIPEAFAQMVQTMKPGQIVGPLRGTSGFQLLKLVEVRDSTAAAGPRQMATEYHARHILVRITDKQKEAQAKAKIDTLRARIAGGADFQTVARESSEDANNSNQGGDLGWFPSDAFGADFGNHVKALADGNVSEPFRSAAGWHIVQRLGTRQTDVTRENQRAQIRDTIGQRKLEESYERFLRELRSEAYVSLQIEEPADDHHTPSAAVTPATGAVLPAATKH.

An N-terminal signal peptide occupies residues 1-25 (MTRYFSIVLSLLLAVSCVFLPVASA). PpiC domains are found at residues 175 to 277 (GAQY…KLVE) and 291 to 390 (ATEY…QRLG). The segment at 439–463 (ADDHHTPSAAVTPATGAVLPAATKH) is disordered.

It localises to the periplasm. The enzyme catalyses [protein]-peptidylproline (omega=180) = [protein]-peptidylproline (omega=0). Its function is as follows. Chaperone involved in the correct folding and assembly of outer membrane proteins. Recognizes specific patterns of aromatic residues and the orientation of their side chains, which are found more frequently in integral outer membrane proteins. May act in both early periplasmic and late outer membrane-associated steps of protein maturation. The sequence is that of Chaperone SurA from Xylella fastidiosa (strain Temecula1 / ATCC 700964).